The primary structure comprises 183 residues: Ribosome rescue factor SmrB (183 aa).

Residues 98-173 enclose the Smr domain; the sequence is LDLHGLTQLQ…GDAALLVLIE (76 aa).

Belongs to the SmrB family. Associates with collided ribosomes, but not with correctly translating polysomes.

Its function is as follows. Acts as a ribosome collision sensor. Detects stalled/collided disomes (pairs of ribosomes where the leading ribosome is stalled and a second ribosome has collided with it) and endonucleolytically cleaves mRNA at the 5' boundary of the stalled ribosome. Stalled/collided disomes form a new interface (primarily via the 30S subunits) that binds SmrB. Cleaved mRNA becomes available for tmRNA ligation, leading to ribosomal subunit dissociation and rescue of stalled ribosomes. The chain is Ribosome rescue factor SmrB from Escherichia fergusonii (strain ATCC 35469 / DSM 13698 / CCUG 18766 / IAM 14443 / JCM 21226 / LMG 7866 / NBRC 102419 / NCTC 12128 / CDC 0568-73).